The sequence spans 710 residues: Ent-copalyl diphosphate synthase 1 (710 aa).

Lys145 serves as a coordination point for substrate. The Mg(2+) site is built by Asp277 and Asp279. Positions 277-280 match the DXDD motif motif; sequence DIDD. Lys364 contacts substrate.

Belongs to the terpene synthase family. Tpsc subfamily. It depends on Mg(2+) as a cofactor. In terms of tissue distribution, expressed in germinating seeds and leaves.

It carries out the reaction (2E,6E,10E)-geranylgeranyl diphosphate = ent-copalyl diphosphate. Its pathway is plant hormone biosynthesis; gibberellin biosynthesis. It functions in the pathway secondary metabolite biosynthesis; terpenoid biosynthesis. Involved in the biosynthesis of ent-kaurene diterpenoids natural products such as oridonin, miltiradiene, eriocalyxin B and nezukol, known to exhibit antitumor, anti-inflammatory and antibacterial activities, and in the production of gibberellins phytohormones. Catalyzes the conversion of (2E,6E,10E)-geranylgeranyl diphosphate (GGPP) to ent-copalyl diphosphate (ent-CPP). The chain is Ent-copalyl diphosphate synthase 1 from Isodon eriocalyx (Plectranthus eriocalyx).